The following is a 218-amino-acid chain: MFTGIIEAVGNISAITSKGSDFEVSVNCDTLDLADVKIGDSIATNGICLTVVKLTANSYVADLSIETLSRTAFNYYKVGQAVNLEKAMLPTTRFGGHIVSGHVDAVAEVIECRTSGRAIDIWIRVPSQIEKYLSEKGSVTVDGVSLTVNAVTGNEFKLTIVPHTVVETTIADFKVGNKVNIEVDVLARYIERLLLVDKPEDKQSKISMDLLERNGFLL.

Lumazine-binding repeat units lie at residues 1–97 and 98–194; these read MFTG…FGGH and IVSG…ERLL. Residues 4-6, 48-50, 62-67, 101-103, Lys-136, 145-147, and 159-164 contribute to the 2,4-dihydroxypteridine site; these read GII, CLT, DLSIET, GHV, SLT, and TIVPHT.

As to quaternary structure, homotrimer.

The enzyme catalyses 2 6,7-dimethyl-8-(1-D-ribityl)lumazine + H(+) = 5-amino-6-(D-ribitylamino)uracil + riboflavin. It participates in cofactor biosynthesis; riboflavin biosynthesis; riboflavin from 2-hydroxy-3-oxobutyl phosphate and 5-amino-6-(D-ribitylamino)uracil: step 2/2. Catalyzes the dismutation of two molecules of 6,7-dimethyl-8-ribityllumazine, resulting in the formation of riboflavin and 5-amino-6-(D-ribitylamino)uracil. The chain is Riboflavin synthase from Photobacterium phosphoreum.